Consider the following 395-residue polypeptide: MAKKYQDLASGIAMGAVFMYLLRRLYESLRVKSSADSLEEDIVNGVEGLIGNTKMVRIKSLSQATGCDILAKAEFLNPGNSPKDRVALQMIRTAEENGDLVPYQSNAVYEGTAGSTGISIAMLCCSLGYDSRIYMPSDQSKEKSDILELLGAHVQRVTPAPIVDPNHFVNTARRNAANHTVDESIPGKGYFANQFENPANWQAHFNSTGPEIWRQCAGKLDAFIAGSGTGGTIAGISRYLKSKDPSITVCLADPPGSGLYHKVLHGVMFDLAEREGTRRRHQVDTIVEGVGINRMTRNFSIAEPLIDMAYRVTDEQAVAMSRYLVTHDGLFVGSSSAVNCVAAVRLAKKLGPGHRIVTLLCDPGSRHFSKLYNEEFLRKKNIVPQVPSSLDFVEA.

A helical membrane pass occupies residues 6–22 (QDLASGIAMGAVFMYLL). Lysine 83 is modified (N6-(pyridoxal phosphate)lysine). Residues 228–232 (GTGGT) and serine 335 each bind pyridoxal 5'-phosphate.

It belongs to the cysteine synthase/cystathionine beta-synthase family. It depends on pyridoxal 5'-phosphate as a cofactor.

It localises to the mitochondrion. Its subcellular location is the mitochondrion outer membrane. The catalysed reaction is O-acetyl-L-serine + hydrogen sulfide = L-cysteine + acetate. In terms of biological role, putative cysteine synthase that catalyzes the conversion of O-acetyl-L-serine (OAS) into cysteine, the last step in the cysteine biosynthesis pathway. However, in contrast to cysteine synthase cys11, this CS-like protein seems not to function in cysteine biosynthesis, at least under normal growth conditions, although the transcript is produced. The protein is Cysteine synthase 2 (cys12) of Schizosaccharomyces pombe (strain 972 / ATCC 24843) (Fission yeast).